Consider the following 776-residue polypeptide: A-type ATP synthase subunit A (776 aa).

It belongs to the ATPase alpha/beta chains family. In terms of assembly, has multiple subunits with at least A(3), B(3), C, D, E, F, H, I and proteolipid K(x). In terms of processing, this protein undergoes a protein self splicing that involves a post-translational excision of the VDE intervening region (intein) followed by peptide ligation.

Its subcellular location is the cell membrane. The catalysed reaction is ATP + H2O + 4 H(+)(in) = ADP + phosphate + 5 H(+)(out). In terms of biological role, component of the A-type ATP synthase that produces ATP from ADP in the presence of a proton gradient across the membrane. The A chain is the catalytic subunit. This chain is A-type ATP synthase subunit A, found in Thermoplasma volcanium (strain ATCC 51530 / DSM 4299 / JCM 9571 / NBRC 15438 / GSS1).